Here is a 133-residue protein sequence, read N- to C-terminus: S-adenosylmethionine decarboxylase proenzyme (133 aa).

Ser64 serves as the catalytic Schiff-base intermediate with substrate; via pyruvic acid. Pyruvic acid (Ser); by autocatalysis is present on Ser64. His69 functions as the Proton acceptor; for processing activity in the catalytic mechanism. Cys84 serves as the catalytic Proton donor; for catalytic activity.

It belongs to the prokaryotic AdoMetDC family. Type 1 subfamily. Heterotetramer of two alpha and two beta chains arranged as a dimer of alpha/beta heterodimers. Pyruvate serves as cofactor. Post-translationally, is synthesized initially as an inactive proenzyme. Formation of the active enzyme involves a self-maturation process in which the active site pyruvoyl group is generated from an internal serine residue via an autocatalytic post-translational modification. Two non-identical subunits are generated from the proenzyme in this reaction, and the pyruvate is formed at the N-terminus of the alpha chain, which is derived from the carboxyl end of the proenzyme. The post-translation cleavage follows an unusual pathway, termed non-hydrolytic serinolysis, in which the side chain hydroxyl group of the serine supplies its oxygen atom to form the C-terminus of the beta chain, while the remainder of the serine residue undergoes an oxidative deamination to produce ammonia and the pyruvoyl group blocking the N-terminus of the alpha chain.

The catalysed reaction is S-adenosyl-L-methionine + H(+) = S-adenosyl 3-(methylsulfanyl)propylamine + CO2. Its pathway is amine and polyamine biosynthesis; S-adenosylmethioninamine biosynthesis; S-adenosylmethioninamine from S-adenosyl-L-methionine: step 1/1. Functionally, catalyzes the decarboxylation of S-adenosylmethionine to S-adenosylmethioninamine (dcAdoMet), the propylamine donor required for the synthesis of the polyamines spermine and spermidine from the diamine putrescine. The protein is S-adenosylmethionine decarboxylase proenzyme of Persephonella marina (strain DSM 14350 / EX-H1).